The sequence spans 758 residues: DNA ligase (758 aa).

Positions Met1–Pro28 are disordered. NAD(+) is bound by residues Asp60–Asp64, Ser109–Leu110, and Glu148. Catalysis depends on Lys150, which acts as the N6-AMP-lysine intermediate. The NAD(+) site is built by Arg171, Glu208, Lys324, and Lys348. Zn(2+)-binding residues include Cys442, Cys445, Cys461, and Cys467. The BRCT domain occupies Ser660 to Asn749. The tract at residues Leu735–Asp758 is disordered.

It belongs to the NAD-dependent DNA ligase family. LigA subfamily. Mg(2+) serves as cofactor. The cofactor is Mn(2+).

It catalyses the reaction NAD(+) + (deoxyribonucleotide)n-3'-hydroxyl + 5'-phospho-(deoxyribonucleotide)m = (deoxyribonucleotide)n+m + AMP + beta-nicotinamide D-nucleotide.. Its function is as follows. DNA ligase that catalyzes the formation of phosphodiester linkages between 5'-phosphoryl and 3'-hydroxyl groups in double-stranded DNA using NAD as a coenzyme and as the energy source for the reaction. It is essential for DNA replication and repair of damaged DNA. The protein is DNA ligase of Renibacterium salmoninarum (strain ATCC 33209 / DSM 20767 / JCM 11484 / NBRC 15589 / NCIMB 2235).